A 140-amino-acid chain; its full sequence is Methylglyoxal synthase (140 aa).

The region spanning 1-140 (MKIALIAHDK…RGRKGEINGL (140 aa)) is the MGS-like domain. Residues histidine 8, lysine 12, 34–37 (TGTT), and 54–55 (SG) each bind substrate. The Proton donor/acceptor role is filled by aspartate 60. Histidine 87 contributes to the substrate binding site.

This sequence belongs to the methylglyoxal synthase family.

It catalyses the reaction dihydroxyacetone phosphate = methylglyoxal + phosphate. Functionally, catalyzes the formation of methylglyoxal from dihydroxyacetone phosphate. This chain is Methylglyoxal synthase, found in Geobacillus sp. (strain WCH70).